A 348-amino-acid chain; its full sequence is D-alanine--D-alanine ligase (348 aa).

The ATP-grasp domain maps to 132-334 (KRVLESAGIP…YSDLIEELVS (203 aa)). 162–217 (LETLSFPIFVKPANMGSSVGISKAESIEGLREAIALALKYDSRILIEQGVVAREIE) is an ATP binding site. Residues Asp-288, Glu-301, and Asn-303 each coordinate Mg(2+).

Belongs to the D-alanine--D-alanine ligase family. It depends on Mg(2+) as a cofactor. Mn(2+) is required as a cofactor.

It localises to the cytoplasm. The catalysed reaction is 2 D-alanine + ATP = D-alanyl-D-alanine + ADP + phosphate + H(+). The protein operates within cell wall biogenesis; peptidoglycan biosynthesis. Cell wall formation. The polypeptide is D-alanine--D-alanine ligase (Streptococcus uberis (strain ATCC BAA-854 / 0140J)).